Reading from the N-terminus, the 234-residue chain is Ribose-5-phosphate isomerase A (234 aa).

Residues 39–42 (TGST), 92–95 (DGAD), and 105–108 (KGGG) contribute to the substrate site. Glu-114 acts as the Proton acceptor in catalysis. A substrate-binding site is contributed by Lys-132.

The protein belongs to the ribose 5-phosphate isomerase family. As to quaternary structure, homodimer.

It catalyses the reaction aldehydo-D-ribose 5-phosphate = D-ribulose 5-phosphate. Its pathway is carbohydrate degradation; pentose phosphate pathway; D-ribose 5-phosphate from D-ribulose 5-phosphate (non-oxidative stage): step 1/1. In terms of biological role, catalyzes the reversible conversion of ribose-5-phosphate to ribulose 5-phosphate. The protein is Ribose-5-phosphate isomerase A of Albidiferax ferrireducens (strain ATCC BAA-621 / DSM 15236 / T118) (Rhodoferax ferrireducens).